A 261-amino-acid chain; its full sequence is MIVIKVGGSVVCKDVSKVIQNLPKYADRAIIVHGGGCLVNEMLKRLGIEPKFLTHPGGLTSRYTDLETLKVFVMAMSWINKQIVASLHALGVEALGLTGADLGVVRAKRKEKVLIVDERGRQRVVDGGYVGRVVHIAADRLKPPPLKVLSPIAVSEKGELLNVDGDQLAFDVAKAVGARQLVLLSDVDGLIIGGRVVPHLTAEEAEELVKSEEVRGGMKRKLLMAAEAAKSGIEVVISNGLVENPIDVALNGSGTHIVKNL.

Residues 35–36, Arg-62, and Asn-162 contribute to the substrate site; that span reads GG.

The protein belongs to the acetylglutamate kinase family. LysZ subfamily.

The protein resides in the cytoplasm. It carries out the reaction [amino-group carrier protein]-C-terminal-N-(1,4-dicarboxybutan-1-yl)-L-glutamine + ATP = [amino-group carrier protein]-C-terminal-N-(1-carboxy-5-phosphooxy-5-oxopentan-1-yl)-L-glutamine + ADP. It catalyses the reaction [amino-group carrier protein]-C-terminal-gamma-(L-glutamyl)-L-glutamate + ATP = [amino-group carrier protein]-C-terminal-gamma-(5-phospho-L-glutamyl)-L-glutamate + ADP. The protein operates within amino-acid biosynthesis; L-lysine biosynthesis via AAA pathway; L-lysine from L-alpha-aminoadipate (Thermus route): step 2/5. Its pathway is amino-acid biosynthesis; L-arginine biosynthesis. Involved in both the arginine and lysine biosynthetic pathways. Phosphorylates the LysW-bound precursors glutamate (for arginine biosynthesis), respectively alpha-aminoadipate (for lysine biosynthesis). The chain is Putative [LysW]-aminoadipate/[LysW]-glutamate kinase from Pyrobaculum islandicum (strain DSM 4184 / JCM 9189 / GEO3).